We begin with the raw amino-acid sequence, 257 residues long: Probable enoyl-CoA hydratase (257 aa).

This sequence belongs to the enoyl-CoA hydratase/isomerase family.

It catalyses the reaction a (3S)-3-hydroxyacyl-CoA = a (2E)-enoyl-CoA + H2O. It carries out the reaction a 4-saturated-(3S)-3-hydroxyacyl-CoA = a (3E)-enoyl-CoA + H2O. Its function is as follows. Could possibly oxidize fatty acids using specific components. The polypeptide is Probable enoyl-CoA hydratase (fadB1) (Rhodobacter capsulatus (strain ATCC BAA-309 / NBRC 16581 / SB1003)).